Here is a 303-residue protein sequence, read N- to C-terminus: Exosome complex component RRP4 homolog (303 aa).

The 39-residue stretch at 175–213 (GILIKVPPHLIKKSKKHFHTLPYGMAVIIGCNGSVWVTP) folds into the KH domain.

Belongs to the RRP4 family. As to quaternary structure, component of the RNA exosome complex. In terms of tissue distribution, ubiquitously expressed.

It is found in the nucleus. The protein localises to the nucleolus. It localises to the nucleoplasm. In terms of biological role, non-catalytic component of the RNA exosome complex which has 3'-&gt;5' exoribonuclease activity and participates in a multitude of cellular RNA processing and degradation events. Involved in regulation of antisense ribosomal siRNA production. Involved in response to cold-warm shock. This Caenorhabditis elegans protein is Exosome complex component RRP4 homolog.